Reading from the N-terminus, the 163-residue chain is Putative NOL1/NOP2/Sun domain family member 5B (163 aa).

The Nucleophile role is filled by cysteine 93.

The protein belongs to the class I-like SAM-binding methyltransferase superfamily. RsmB/NOP family. Ubiquitous.

The polypeptide is Putative NOL1/NOP2/Sun domain family member 5B (NSUN5P1) (Homo sapiens (Human)).